The sequence spans 127 residues: Evasin P467 (127 aa).

Positions 1–21 are cleaved as a signal peptide; it reads MALKACITVIAVVYVVQVVRG. Intrachain disulfides connect cysteine 42–cysteine 63, cysteine 59–cysteine 100, cysteine 76–cysteine 105, and cysteine 95–cysteine 114. Residues asparagine 49 and asparagine 94 are each glycosylated (N-linked (GlcNAc...) asparagine).

The protein localises to the secreted. Its function is as follows. Salivary chemokine-binding protein which binds to host chemokines CCL1, CCL2, CCL3 and CCL5. The protein is Evasin P467 of Rhipicephalus pulchellus (Yellow backed tick).